A 232-amino-acid polypeptide reads, in one-letter code: 5'-methylthioadenosine/S-adenosylhomocysteine nucleosidase (232 aa).

Residue Glu12 is the Proton acceptor of the active site. Substrate-binding positions include Gly78, Ile152, and 173 to 174; that span reads ME. Asp197 serves as the catalytic Proton donor.

The protein belongs to the PNP/UDP phosphorylase family. MtnN subfamily. Homodimer.

The enzyme catalyses S-adenosyl-L-homocysteine + H2O = S-(5-deoxy-D-ribos-5-yl)-L-homocysteine + adenine. It catalyses the reaction S-methyl-5'-thioadenosine + H2O = 5-(methylsulfanyl)-D-ribose + adenine. The catalysed reaction is 5'-deoxyadenosine + H2O = 5-deoxy-D-ribose + adenine. The protein operates within amino-acid biosynthesis; L-methionine biosynthesis via salvage pathway; S-methyl-5-thio-alpha-D-ribose 1-phosphate from S-methyl-5'-thioadenosine (hydrolase route): step 1/2. Catalyzes the irreversible cleavage of the glycosidic bond in both 5'-methylthioadenosine (MTA) and S-adenosylhomocysteine (SAH/AdoHcy) to adenine and the corresponding thioribose, 5'-methylthioribose and S-ribosylhomocysteine, respectively. Also cleaves 5'-deoxyadenosine, a toxic by-product of radical S-adenosylmethionine (SAM) enzymes, into 5-deoxyribose and adenine. Thus, is required for in vivo function of the radical SAM enzymes biotin synthase and lipoic acid synthase, that are inhibited by 5'-deoxyadenosine accumulation. This chain is 5'-methylthioadenosine/S-adenosylhomocysteine nucleosidase, found in Salmonella arizonae (strain ATCC BAA-731 / CDC346-86 / RSK2980).